The chain runs to 433 residues: MSDKLSYKVADISLADWGRKAIEIAENEMPGLMKMREMHSESKPLKGARIAGCLHMTLQTAVLIETLTALGAEVQWSSCNIFSTQDHAAAAIAKTGVPVYAWKGETDEEYIWCIEQTIYFKDGKPLNMILDDGGDLTNLVHSKYPQLLKGIKGISEETTTGVHNLYKMKSSGTLQVPAINVNDSVTKSKFDNLYGCRESLIDGIKRATDVMIAGKVAVVAGYGDVGKGCAQALRAFGARVIITEIDPINALQAAMEGYEVTTMDEASKEGNIFVTTTGCADIVEGRHFENMKDDSIVCNIGHFDIELDVKWLNENAVKKVNIKPQVDRYLLKNGRHIILLAEGRLVNLGCAMGHPSFVMSNSFTNQVMAQIELWTNTDKYPVGVYFLPKKLDEAVAAAHLDKLGVKLTKLTDKQAKYLGLDKEGPFKPDHYRY.

Residues Thr57, Asp132, Glu157, Lys187, and Asp191 each contribute to the substrate site. Residues 184–351 (SVTKSKFDNL…EGRLVNLGCA (168 aa)) are NAD binding.

Belongs to the adenosylhomocysteinase family. In terms of assembly, homotetramer. NAD(+) is required as a cofactor.

It localises to the cytoplasm. It catalyses the reaction S-adenosyl-L-homocysteine + H2O = L-homocysteine + adenosine. It participates in amino-acid biosynthesis; L-homocysteine biosynthesis; L-homocysteine from S-adenosyl-L-homocysteine: step 1/1. In terms of biological role, catalyzes the hydrolysis of S-adenosyl-L-homocysteine to form adenosine and homocysteine. Binds copper ions. In Xenopus laevis (African clawed frog), this protein is Adenosylhomocysteinase A (ahcy-a).